Reading from the N-terminus, the 283-residue chain is Gap junction alpha-6 protein (283 aa).

Residues M1 to K23 lie on the Cytoplasmic side of the membrane. A helical membrane pass occupies residues V24–I41. The Extracellular portion of the chain corresponds to E42 to R76. A helical transmembrane segment spans residues L77–V99. Residues V100–R150 lie on the Cytoplasmic side of the membrane. The chain crosses the membrane as a helical span at residues L151–Q173. Residues W174–I208 are Extracellular-facing. A helical transmembrane segment spans residues F209–V231. Topologically, residues L232–I283 are cytoplasmic.

The protein belongs to the connexin family. Alpha-type (group II) subfamily. A connexon is composed of a hexamer of connexins.

The protein resides in the cell membrane. Its subcellular location is the cell junction. The protein localises to the gap junction. In terms of biological role, one gap junction consists of a cluster of closely packed pairs of transmembrane channels, the connexons, through which materials of low MW diffuse from one cell to a neighboring cell. This Mus musculus (Mouse) protein is Gap junction alpha-6 protein (Gja6).